The primary structure comprises 728 residues: U-box domain-containing protein 4 (728 aa).

Residues 296 to 370 enclose the U-box domain; sequence SVPKEFSCPI…SQWCGVYGLQ (75 aa). ARM repeat units follow at residues 441–483 and 526–568; these read GAIP…EQEG and GAVE…ESCA.

It carries out the reaction S-ubiquitinyl-[E2 ubiquitin-conjugating enzyme]-L-cysteine + [acceptor protein]-L-lysine = [E2 ubiquitin-conjugating enzyme]-L-cysteine + N(6)-ubiquitinyl-[acceptor protein]-L-lysine.. The protein operates within protein modification; protein ubiquitination. Possesses E3 ubiquitin-protein ligase in vitro. In Oryza sativa subsp. japonica (Rice), this protein is U-box domain-containing protein 4 (PUB4).